Consider the following 79-residue polypeptide: Short neurotoxin 1/5 (79 aa).

The first 21 residues, 1–21, serve as a signal peptide directing secretion; sequence MKTLLLTLVMVTIMCLDLGYT. 4 disulfide bridges follow: cysteine 24/cysteine 41, cysteine 34/cysteine 59, cysteine 63/cysteine 71, and cysteine 72/cysteine 77.

Belongs to the three-finger toxin family. Short-chain subfamily. Type III alpha-neurotoxin sub-subfamily. As to expression, expressed by the venom gland.

The protein resides in the secreted. Functionally, binds with high affinity to muscle nicotinic acetylcholine receptor (nAChR) and inhibit acetylcholine from binding to the receptor, thereby impairing neuromuscular transmission. Compete with the binding of alpha-bungarotoxin on muscle AChR (from Torpedo) with an IC(50) of 0.31 uM (SNTX1) and 3.1 uM (SNTX5). Is able of exerting muscle paralysis, spasms and increased respiration. In Pseudonaja textilis (Eastern brown snake), this protein is Short neurotoxin 1/5.